The following is a 591-amino-acid chain: ATPase family AAA domain-containing protein 3A (591 aa).

Residues 1–52 (MSWLFGIKGPKGEGTGPPLPLPPAQPGAESGGDRGAGDRPSPKDKWSNFDPT) form a disordered region. Serine 2 bears the N-acetylserine mark. Residues 2–49 (SWLFGIKGPKGEGTGPPLPLPPAQPGAESGGDRGAGDRPSPKDKWSNF) are required for interaction with the inner surface of the mitochondrial outer membrane. At 2–245 (SWLFGIKGPK…FRAFVTDWDK (244 aa)) the chain is on the mitochondrial intermembrane side. The segment covering 31-47 (GGDRGAGDRPSPKDKWS) has biased composition (basic and acidic residues). Residues 55–216 (ERAAKAAREL…REQIRLKAAE (162 aa)) are a coiled coil. Residues 246–263 (VTATVAGLTLLAVGVYSA) traverse the membrane as a helical segment. Topologically, residues 264-591 (KNATSVAGRY…KPPHPSLLSC (328 aa)) are mitochondrial matrix. An S100B-binding region spans residues 289–304 (RISVLEALRHPIQVSR). Residue 351-358 (GPPGTGKT) coordinates ATP. At lysine 490 the chain carries N6-acetyllysine; alternate. Lysine 490 carries the post-translational modification N6-succinyllysine; alternate. N6-acetyllysine is present on residues lysine 494 and lysine 512.

It belongs to the AAA ATPase family. Can form homooligomers. Homodimer formation at the N-terminus may be regulated by ATP and is required for the interaction with the inner surface of the mitochondrial outer membrane and correct mitochondrial homeostasis. Interacts with components of the mitochondrial ribosome and with other proteins involved in mitochondrial RNA metabolism. May also interact with protein involved in lipid metabolism, including STARD9. May interact with FAM210A. Interacts with GADD45GIP1. Interacts with S100B in a Ca(+2)- and Zn(+2)-dependent manner; this interaction probably occurs in the cytosol prior to mitochondrial targeting. S100B could assist ATAD3A cytoplasmic processing, preventing aggregation and favoring mitochondrial localization. Interacts with HSP60/HSPD1. Interacts with CLPB. Interacts with EIF2AK3/PERK; ATAD3A and EIF2S1/eIF-2-alpha occupy a common binding site within the cytoplasmic loop of EIF2AK3/PERK, leading to prevent EIF2AK3/PERK association with its substrate EIF2S1/eIF-2-alpha.

It localises to the mitochondrion inner membrane. Its subcellular location is the mitochondrion matrix. The protein resides in the mitochondrion nucleoid. It catalyses the reaction ATP + H2O = ADP + phosphate + H(+). Essential for mitochondrial network organization, mitochondrial metabolism and cell growth at organism and cellular level. May play an important role in mitochondrial protein synthesis. May also participate in mitochondrial DNA replication. May bind to mitochondrial DNA D-loops and contribute to nucleoid stability. Required for enhanced channeling of cholesterol for hormone-dependent steroidogenesis. Involved in mitochondrial-mediated antiviral innate immunity. Required to protect mitochondria from the PERK-mediated unfolded protein response: specifically inhibits the activity of EIF2AK3/PERK at mitochondria-endoplasmic reticulum contact sites, thereby providing a safe haven for mitochondrial protein translation during endoplasmic reticulum stress. Ability to inhibit EIF2AK3/PERK is independent of its ATPase activity. Also involved in the mitochondrial DNA damage response by promoting signaling between damaged genomes and the mitochondrial membrane, leading to activation of the integrated stress response (ISR). The chain is ATPase family AAA domain-containing protein 3A (Atad3a) from Rattus norvegicus (Rat).